Here is a 194-residue protein sequence, read N- to C-terminus: PBAN-type neuropeptides (194 aa).

The signal sequence occupies residues 1–23 (MFNQTQLFVFLAVFTTSSVLGNN). At Leu-47 the chain carries Leucine amide. A propeptide spanning residues 51-94 (SLRISTEDNRQAFFKLLEAADALKYYYDQLPYEMQADEPETRVT) is cleaved from the precursor. Leucine amide occurs at positions 103, 123, 159, and 169. Residues 172-194 (ELSYDMMPNKIRVVRSTNKTRST) constitute a propeptide that is removed on maturation.

The protein belongs to the pyrokinin family. As to expression, expressed in the subesophageal ganglions. Not found in corpora cardiaca, corpora allata and thoracic ganglia.

The protein resides in the secreted. A hormone that controls sex pheromone production in females and pheromone responsiveness in male. Also mediates visceral muscle contractile activity (myotropic activity). The protein is PBAN-type neuropeptides of Helicoverpa zea (Corn earworm moth).